Reading from the N-terminus, the 218-residue chain is NAD(P)H-quinone oxidoreductase subunit U, chloroplastic (218 aa).

Residues 1-53 constitute a chloroplast transit peptide; the sequence is MASLSTITQPSLVHIPGESVLHHVPSTCSFPWKPTINTKRIICSPARNSSEVS. The disordered stretch occupies residues 47 to 72; it reads RNSSEVSAEAETEGGSSTAVDEAPKE. In terms of domain architecture, J spans 95 to 159; the sequence is DHYGRLGIFR…EERRMYDWSL (65 aa). A helical transmembrane segment spans residues 197-217; that stretch reads ILGYFIGAWLVLGVALSVAFN.

Part of the chloroplast NDH complex, composed of a mixture of chloroplast and nucleus encoded subunits. Component of the electron donor-binding subcomplex, at least composed of NDHS, NDHT and NDHU.

It localises to the plastid. It is found in the chloroplast thylakoid membrane. It carries out the reaction a plastoquinone + NADH + (n+1) H(+)(in) = a plastoquinol + NAD(+) + n H(+)(out). The enzyme catalyses a plastoquinone + NADPH + (n+1) H(+)(in) = a plastoquinol + NADP(+) + n H(+)(out). Its function is as follows. NDH shuttles electrons from NAD(P)H:plastoquinone, via FMN and iron-sulfur (Fe-S) centers, to quinones in the photosynthetic chain and possibly in a chloroplast respiratory chain. The immediate electron acceptor for the enzyme in this species is believed to be plastoquinone. Couples the redox reaction to proton translocation, and thus conserves the redox energy in a proton gradient. This chain is NAD(P)H-quinone oxidoreductase subunit U, chloroplastic, found in Arabidopsis thaliana (Mouse-ear cress).